Here is a 245-residue protein sequence, read N- to C-terminus: tRNA (guanine-N(1)-)-methyltransferase (245 aa).

Residues Gly-113 and 133–138 (IGDYVL) each bind S-adenosyl-L-methionine.

This sequence belongs to the RNA methyltransferase TrmD family. Homodimer.

The protein localises to the cytoplasm. The enzyme catalyses guanosine(37) in tRNA + S-adenosyl-L-methionine = N(1)-methylguanosine(37) in tRNA + S-adenosyl-L-homocysteine + H(+). In terms of biological role, specifically methylates guanosine-37 in various tRNAs. The chain is tRNA (guanine-N(1)-)-methyltransferase from Histophilus somni (strain 129Pt) (Haemophilus somnus).